We begin with the raw amino-acid sequence, 269 residues long: Mitochondrial genome maintenance protein MGM101 (269 aa).

A mitochondrion-targeting transit peptide spans 1–30 (MKSIFKVRGCVSHAAQFCQKRTVVSTGTSN).

The protein belongs to the MGM101 family.

It localises to the mitochondrion matrix. It is found in the mitochondrion nucleoid. Functionally, performs an essential function in the repair of oxidatively damaged mtDNA that is required for the maintenance of the mitochondrial genome. Binds to DNA. This Saccharomyces cerevisiae (strain ATCC 204508 / S288c) (Baker's yeast) protein is Mitochondrial genome maintenance protein MGM101 (MGM101).